A 348-amino-acid polypeptide reads, in one-letter code: tRNA N6-adenosine threonylcarbamoyltransferase (348 aa).

Fe cation-binding residues include histidine 111 and histidine 115. Substrate-binding positions include 134 to 138 (LVSGG), aspartate 167, glycine 180, aspartate 184, and asparagine 279. Residue aspartate 307 coordinates Fe cation.

The protein belongs to the KAE1 / TsaD family. It depends on Fe(2+) as a cofactor.

It localises to the cytoplasm. The enzyme catalyses L-threonylcarbamoyladenylate + adenosine(37) in tRNA = N(6)-L-threonylcarbamoyladenosine(37) in tRNA + AMP + H(+). Its function is as follows. Required for the formation of a threonylcarbamoyl group on adenosine at position 37 (t(6)A37) in tRNAs that read codons beginning with adenine. Is involved in the transfer of the threonylcarbamoyl moiety of threonylcarbamoyl-AMP (TC-AMP) to the N6 group of A37, together with TsaE and TsaB. TsaD likely plays a direct catalytic role in this reaction. This Synechocystis sp. (strain ATCC 27184 / PCC 6803 / Kazusa) protein is tRNA N6-adenosine threonylcarbamoyltransferase.